The primary structure comprises 218 residues: MKTIANESFLLDTKVPEPTLRRLPWYLSYVQLLHADGCESVSSTRIARAVGVDASLVAKDLSYVSVDGRTRVGYRVADMVAVLNDFLGFTHHHRAFLFGVGSLGAALLQDSGLRHFGLEIAAGFDVNPDIVDTNINGIPVYHKSRVAELCARERVDIGILTVPIRAAQSMADEMIAAGIKAIWNFTPWRISVPEGVVVQNTSMYAQLAVMFNRMKSLP.

A DNA-binding region (H-T-H motif) is located at residues 25–64 (WYLSYVQLLHADGCESVSSTRIARAVGVDASLVAKDLSYV). 99–104 (GVGSLG) is a binding site for NAD(+).

The protein belongs to the transcriptional regulatory Rex family. Homodimer.

Its subcellular location is the cytoplasm. Modulates transcription in response to changes in cellular NADH/NAD(+) redox state. The protein is Redox-sensing transcriptional repressor Rex of Porphyromonas gingivalis (strain ATCC BAA-308 / W83).